The chain runs to 860 residues: GPI ethanolamine phosphate transferase 2 (860 aa).

N-linked (GlcNAc...) asparagine glycans are attached at residues asparagine 123 and asparagine 180. The next 8 membrane-spanning stretches (helical) occupy residues 408 to 428 (LGGI…FSAL), 438 to 458 (LYLI…TVEE), 459 to 479 (EHQI…ISGS), 487 to 506 (FNWM…NQTG), 524 to 544 (NHPV…NKVW), 555 to 575 (LAFL…ITQA), 576 to 596 (WEAG…PGTL), and 639 to 659 (AFLT…LFMV). Asparagine 672 carries an N-linked (GlcNAc...) asparagine glycan. 4 helical membrane-spanning segments follow: residues 692 to 712 (LVLV…FSMG), 736 to 756 (FVGV…STAG), 795 to 815 (VYVV…TCFF), and 834 to 854 (FVWT…IFVV).

This sequence belongs to the PIGG/PIGN/PIGO family. PIGG subfamily.

It localises to the endoplasmic reticulum membrane. The protein operates within glycolipid biosynthesis; glycosylphosphatidylinositol-anchor biosynthesis. Functionally, ethanolamine phosphate transferase involved in glycosylphosphatidylinositol-anchor biosynthesis. Transfers ethanolamine phosphate to the GPI second mannose. The protein is GPI ethanolamine phosphate transferase 2 (LAS21) of Yarrowia lipolytica (strain CLIB 122 / E 150) (Yeast).